A 127-amino-acid polypeptide reads, in one-letter code: MARVKRSVNAKKKRREVLKSAKGYRGQRSRLYRKAKEQMLHSKTYEFRDRKARKNEFRKLWIQRINAGARQNGMTYNRLIQGLRLAEIEVDRKNLAELAVNDFDAFTALCEAAKAALPEDVNAPAAS.

This sequence belongs to the bacterial ribosomal protein bL20 family.

In terms of biological role, binds directly to 23S ribosomal RNA and is necessary for the in vitro assembly process of the 50S ribosomal subunit. It is not involved in the protein synthesizing functions of that subunit. The polypeptide is Large ribosomal subunit protein bL20 (Corynebacterium jeikeium (strain K411)).